We begin with the raw amino-acid sequence, 429 residues long: Enolase (429 aa).

Residue glutamine 174 coordinates (2R)-2-phosphoglycerate. Catalysis depends on glutamate 218, which acts as the Proton donor. Mg(2+) contacts are provided by aspartate 254, glutamate 295, and aspartate 321. Positions 346, 375, 376, and 397 each coordinate (2R)-2-phosphoglycerate. The active-site Proton acceptor is the lysine 346.

Belongs to the enolase family. It depends on Mg(2+) as a cofactor.

It localises to the cytoplasm. Its subcellular location is the secreted. The protein localises to the cell surface. It catalyses the reaction (2R)-2-phosphoglycerate = phosphoenolpyruvate + H2O. Its pathway is carbohydrate degradation; glycolysis; pyruvate from D-glyceraldehyde 3-phosphate: step 4/5. In terms of biological role, catalyzes the reversible conversion of 2-phosphoglycerate (2-PG) into phosphoenolpyruvate (PEP). It is essential for the degradation of carbohydrates via glycolysis. The chain is Enolase from Methanosarcina acetivorans (strain ATCC 35395 / DSM 2834 / JCM 12185 / C2A).